A 197-amino-acid polypeptide reads, in one-letter code: MAASKDGCGVGEVAAGNGRRLHLGIPEAVFVEDVDSFMKQPGNETADIVLKKLDEQYQKYKFMELNLAQKKRRLKGQIPEIKQTLEILKYKQKKKESTSSLETRFLLADNLYCKASVPPTDKVCLWLGANVMLEYDIDEAQALLEKNLLTATKNLDSLEEDLDFLRDQFTTTEVNMARVYNWDVKRRNKDDSTKNKA.

N-acetylalanine is present on alanine 2. Lysine 59 is modified (N6-acetyllysine).

It belongs to the prefoldin subunit alpha family. Heterohexamer of two PFD-alpha type and four PFD-beta type subunits. Binds to the C-terminal part of VHL.

The protein localises to the cytoplasm. It is found in the nucleus. Its function is as follows. Binds specifically to cytosolic chaperonin (c-CPN) and transfers target proteins to it. Binds to nascent polypeptide chain and promotes folding in an environment in which there are many competing pathways for nonnative proteins. This Bos taurus (Bovine) protein is Prefoldin subunit 3 (VBP1).